The sequence spans 197 residues: Imidazoleglycerol-phosphate dehydratase (197 aa).

It belongs to the imidazoleglycerol-phosphate dehydratase family.

The protein resides in the cytoplasm. It catalyses the reaction D-erythro-1-(imidazol-4-yl)glycerol 3-phosphate = 3-(imidazol-4-yl)-2-oxopropyl phosphate + H2O. It functions in the pathway amino-acid biosynthesis; L-histidine biosynthesis; L-histidine from 5-phospho-alpha-D-ribose 1-diphosphate: step 6/9. This Alkalilimnicola ehrlichii (strain ATCC BAA-1101 / DSM 17681 / MLHE-1) protein is Imidazoleglycerol-phosphate dehydratase.